Here is a 169-residue protein sequence, read N- to C-terminus: MQFASFISLDWGVVFQIVNTIVMYLILKKLLFKPVTKFMNDRQESIANSIKEAEETKKEAYALKAEYEAKINASKEEGQEIIKEASRKAEMRADEIIKNAQNEANRLMEKAHIEIEREKQKVVNELKDEISNIAILAASKVIEADIDKNKHEKLISDFIKEVGEATWQN.

The helical transmembrane segment at 5–27 (SFISLDWGVVFQIVNTIVMYLIL) threads the bilayer.

It belongs to the ATPase B chain family. As to quaternary structure, F-type ATPases have 2 components, F(1) - the catalytic core - and F(0) - the membrane proton channel. F(1) has five subunits: alpha(3), beta(3), gamma(1), delta(1), epsilon(1). F(0) has three main subunits: a(1), b(2) and c(10-14). The alpha and beta chains form an alternating ring which encloses part of the gamma chain. F(1) is attached to F(0) by a central stalk formed by the gamma and epsilon chains, while a peripheral stalk is formed by the delta and b chains.

It localises to the cell membrane. Its function is as follows. F(1)F(0) ATP synthase produces ATP from ADP in the presence of a proton or sodium gradient. F-type ATPases consist of two structural domains, F(1) containing the extramembraneous catalytic core and F(0) containing the membrane proton channel, linked together by a central stalk and a peripheral stalk. During catalysis, ATP synthesis in the catalytic domain of F(1) is coupled via a rotary mechanism of the central stalk subunits to proton translocation. In terms of biological role, component of the F(0) channel, it forms part of the peripheral stalk, linking F(1) to F(0). In this organism this enzyme may function as an ATP-driven Na(+) ion pump to generate a Na(+) ion electrochemical gradient rather than as an ATP synthase. This chain is ATP synthase subunit b, sodium ion specific (atpF), found in Clostridium paradoxum.